A 279-amino-acid chain; its full sequence is Large ribosomal subunit protein uL2 (279 aa).

Disordered regions lie at residues 31 to 61 (KSLLEPLTKSGGRNSAGRKTSRHRGGGHKRH) and 222 to 279 (GMAM…RNAK). A compositionally biased stretch (basic residues) spans 49 to 61 (KTSRHRGGGHKRH). Positions 232–242 (MGGGEGKSKSG) are enriched in gly residues. Residues 259–268 (LKTRNRKKAS) are compositionally biased toward basic residues.

The protein belongs to the universal ribosomal protein uL2 family. As to quaternary structure, part of the 50S ribosomal subunit. Forms a bridge to the 30S subunit in the 70S ribosome.

Functionally, one of the primary rRNA binding proteins. Required for association of the 30S and 50S subunits to form the 70S ribosome, for tRNA binding and peptide bond formation. It has been suggested to have peptidyltransferase activity; this is somewhat controversial. Makes several contacts with the 16S rRNA in the 70S ribosome. This is Large ribosomal subunit protein uL2 from Chlorobium chlorochromatii (strain CaD3).